The following is a 570-amino-acid chain: Mitoguardin 1 (570 aa).

A helical membrane pass occupies residues 34–54; it reads GLKKIIAVAAISGVSLIFLAC.

The protein belongs to the mitoguardin family. As to quaternary structure, homodimer and heterodimer; forms heterodimers with miga2.

It localises to the mitochondrion outer membrane. Regulator of mitochondrial fusion: acts by forming homo- and heterodimers at the mitochondrial outer membrane and facilitating the formation of pld6/MitoPLD dimers. May act by regulating phospholipid metabolism via pld6/MitoPLD. The protein is Mitoguardin 1 of Xenopus laevis (African clawed frog).